A 304-amino-acid chain; its full sequence is UDP-N-acetylenolpyruvoylglucosamine reductase (304 aa).

The FAD-binding PCMH-type domain occupies Ile-34–Gly-198. The active site involves Arg-177. Residue Ser-227 is the Proton donor of the active site. The active site involves Glu-297.

The protein belongs to the MurB family. The cofactor is FAD.

It localises to the cytoplasm. It carries out the reaction UDP-N-acetyl-alpha-D-muramate + NADP(+) = UDP-N-acetyl-3-O-(1-carboxyvinyl)-alpha-D-glucosamine + NADPH + H(+). It functions in the pathway cell wall biogenesis; peptidoglycan biosynthesis. Cell wall formation. The chain is UDP-N-acetylenolpyruvoylglucosamine reductase from Geobacillus thermodenitrificans (strain NG80-2).